The sequence spans 123 residues: Protein Wnt-7b (123 aa).

S1 is lipidated: O-palmitoleoyl serine; by PORCN. Residues V33–T61 form a disordered linker region. C89 and C104 are joined by a disulfide. N90 carries an N-linked (GlcNAc...) asparagine glycan.

This sequence belongs to the Wnt family. Post-translationally, palmitoleoylation is required for efficient binding to frizzled receptors. Depalmitoleoylation leads to Wnt signaling pathway inhibition.

The protein localises to the secreted. It localises to the extracellular space. Its subcellular location is the extracellular matrix. In terms of biological role, ligand for members of the frizzled family of seven transmembrane receptors that functions in the canonical Wnt/beta-catenin signaling pathway. Required for normal fusion of the chorion and the allantois during placenta development. Required for central nervous system (CNS) angiogenesis and blood-brain barrier regulation. The protein is Protein Wnt-7b (WNT7B) of Anser caerulescens (Snow goose).